Here is a 194-residue protein sequence, read N- to C-terminus: Fibroblast growth factor 7 (194 aa).

Positions 1–31 (MRKWILTWILPTLLYRSCFHIICLVGTISLA) are cleaved as a signal peptide. Asn45 carries an N-linked (GlcNAc...) asparagine glycan.

This sequence belongs to the heparin-binding growth factors family. As to quaternary structure, interacts with FGFBP1. Interacts with FGFR2. Affinity between fibroblast growth factors (FGFs) and their receptors is increased by heparan sulfate glycosaminoglycans that function as coreceptors.

The protein resides in the secreted. Functionally, plays an important role in the regulation of embryonic development, cell proliferation and cell differentiation. Required for normal branching morphogenesis. Growth factor active on keratinocytes. Possible major paracrine effector of normal epithelial cell proliferation. This Canis lupus familiaris (Dog) protein is Fibroblast growth factor 7 (FGF7).